The sequence spans 70 residues: Small ribosomal subunit protein bS21 (70 aa).

The protein belongs to the bacterial ribosomal protein bS21 family.

This Nitrosospira multiformis (strain ATCC 25196 / NCIMB 11849 / C 71) protein is Small ribosomal subunit protein bS21.